A 214-amino-acid chain; its full sequence is Glycoprotein Q2 (214 aa).

Residues 1–19 (MHFLVVYILIHFHAYRGMA) form the signal peptide. Residues Asn41, Asn74, Asn110, and Asn210 are each glycosylated (N-linked (GlcNAc...) asparagine; by host).

Interacts with isoform gQ1. The heterodimer gQ1-gQ2 associates with the glycoprotein complex gH-gL to form a tetrameric complex. The gH/gL/gQ1/gQ2 complex binds to human receptor CD46. In terms of processing, glycosylated by host.

It is found in the virion membrane. The protein localises to the host endoplasmic reticulum-Golgi intermediate compartment. Functionally, plays a role in virus entry by participating in host receptor binding at the cell surface. This Human herpesvirus 6A (strain Uganda-1102) (HHV-6 variant A) protein is Glycoprotein Q2.